Consider the following 25-residue polypeptide: Hemocyanin subunit 2 (25 aa).

The protein belongs to the tyrosinase family. Hemocyanin subfamily. Hemolymph.

The protein resides in the secreted. Its subcellular location is the extracellular space. Its function is as follows. Hemocyanins are copper-containing oxygen carriers occurring freely dissolved in the hemolymph of many mollusks and arthropods. The chain is Hemocyanin subunit 2 from Carcinus maenas (Common shore crab).